The primary structure comprises 328 residues: GMP reductase (328 aa).

Catalysis depends on Cys176, which acts as the Thioimidate intermediate. 205–228 provides a ligand contact to NADP(+); the sequence is IIADGGIRTHGDIAKSIRFGASMI.

The protein belongs to the IMPDH/GMPR family. GuaC type 2 subfamily.

The catalysed reaction is IMP + NH4(+) + NADP(+) = GMP + NADPH + 2 H(+). Its function is as follows. Catalyzes the irreversible NADPH-dependent deamination of GMP to IMP. It functions in the conversion of nucleobase, nucleoside and nucleotide derivatives of G to A nucleotides, and in maintaining the intracellular balance of A and G nucleotides. This Streptococcus pneumoniae (strain JJA) protein is GMP reductase.